A 71-amino-acid chain; its full sequence is Large ribosomal subunit protein bL31 (71 aa).

It belongs to the bacterial ribosomal protein bL31 family. Type A subfamily. In terms of assembly, part of the 50S ribosomal subunit.

Its function is as follows. Binds the 23S rRNA. In Mycoplasmopsis synoviae (strain 53) (Mycoplasma synoviae), this protein is Large ribosomal subunit protein bL31 (rpmE).